A 101-amino-acid chain; its full sequence is Small ribosomal subunit protein uS14 (101 aa).

Belongs to the universal ribosomal protein uS14 family. Part of the 30S ribosomal subunit. Contacts proteins S3 and S10.

Binds 16S rRNA, required for the assembly of 30S particles and may also be responsible for determining the conformation of the 16S rRNA at the A site. The sequence is that of Small ribosomal subunit protein uS14 from Paraburkholderia phytofirmans (strain DSM 17436 / LMG 22146 / PsJN) (Burkholderia phytofirmans).